Consider the following 223-residue polypeptide: MPLPLLPPLLLPLEALLDLALHLVDSTGVAYSARQVTPTAPLPRLRGSSTSNDVTDNSGCKELTFIFARGTTEIGNMGTVVGPKVGEALKSLTGNKAAIQGVDYPADAAGNAALGGSGGPKMASLVETALKQCPDTKIVLGGYSQGAMVVHNAASKLSSGQVVGAVTFGDPFKSQKPDNIDQFKTFCASGDPVCLNGANVMAHLSYGNDAQTAAQFLVSAAGL.

Residues 1 to 26 (MPLPLLPPLLLPLEALLDLALHLVDS) form the signal peptide. Cys-60 and Cys-133 form a disulfide bridge. The active-site Nucleophile is the Ser-144. Cys-187 and Cys-194 are joined by a disulfide. The active site involves Asp-191. Catalysis depends on His-203, which acts as the Proton donor/acceptor.

It belongs to the cutinase family. Post-translationally, the 2 disulfide bonds play a critical role in holding the catalytic residues in juxta-position; reduction of the disulfide bridges results in the complete inactivation of the enzyme.

It localises to the secreted. It catalyses the reaction cutin + H2O = cutin monomers.. Its function is as follows. Catalyzes the hydrolysis of complex carboxylic polyesters found in the cell wall of plants. Degrades cutin, a macromolecule that forms the structure of the plant cuticle. Also degrades suberin, a specialized macromolecule found in the cell wall of various plant tissues. The chain is Cutinase 4 from Emericella nidulans (strain FGSC A4 / ATCC 38163 / CBS 112.46 / NRRL 194 / M139) (Aspergillus nidulans).